Here is a 108-residue protein sequence, read N- to C-terminus: UPF0060 membrane protein SAR2425 (108 aa).

4 consecutive transmembrane segments (helical) span residues Ile-5–Trp-25, Ser-31–Phe-51, Val-60–Asp-80, and Lys-86–Ser-106.

Belongs to the UPF0060 family.

It is found in the cell membrane. This Staphylococcus aureus (strain MRSA252) protein is UPF0060 membrane protein SAR2425.